Reading from the N-terminus, the 512-residue chain is Putative ribose/galactose/methyl galactoside import ATP-binding protein 1 (512 aa).

ABC transporter domains lie at 14–251 (IALT…VGRQ) and 262–507 (TSAN…TQRE). An ATP-binding site is contributed by 46–53 (GENGAGKS).

This sequence belongs to the ABC transporter superfamily. Carbohydrate importer 2 (CUT2) (TC 3.A.1.2) family.

It is found in the cell inner membrane. The catalysed reaction is D-ribose(out) + ATP + H2O = D-ribose(in) + ADP + phosphate + H(+). It carries out the reaction D-galactose(out) + ATP + H2O = D-galactose(in) + ADP + phosphate + H(+). Part of an ABC transporter complex involved in carbohydrate import. Could be involved in ribose, galactose and/or methyl galactoside import. Responsible for energy coupling to the transport system. The chain is Putative ribose/galactose/methyl galactoside import ATP-binding protein 1 from Burkholderia lata (strain ATCC 17760 / DSM 23089 / LMG 22485 / NCIMB 9086 / R18194 / 383).